A 466-amino-acid chain; its full sequence is Citrate synthase, mitochondrial (466 aa).

The N-terminal 27 residues, 1-27, are a transit peptide targeting the mitochondrion; sequence MALLTAAARLFGAKNASCLVLAARHAS. The SIFI-degron motif lies at 2–21; the sequence is ALLTAAARLFGAKNASCLVL. Lys57 bears the N6-succinyllysine mark. Lys76 is subject to N6-acetyllysine; alternate. Position 76 is an N6-succinyllysine; alternate (Lys76). An N6-succinyllysine mark is found at Lys103 and Lys193. At Ser226 the chain carries Phosphoserine. Residue His301 is part of the active site. N6-acetyllysine; alternate is present on residues Lys321 and Lys327. N6-succinyllysine; alternate occurs at positions 321 and 327. His347 is an active-site residue. Oxaloacetate is bound at residue Arg356. Residue Lys375 is modified to N6-acetyllysine; alternate. N6-succinyllysine; alternate is present on Lys375. Lys382 is subject to N6-acetyllysine. An N6-acetyllysine; alternate modification is found at Lys393. Lys393 is modified (N6-succinyllysine; alternate). Lys395 bears the N6,N6,N6-trimethyllysine mark. Asp402 is an active-site residue. Oxaloacetate contacts are provided by Arg428 and Arg448. At Lys450 the chain carries N6-succinyllysine. N6-acetyllysine; alternate is present on Lys459. Lys459 carries the N6-succinyllysine; alternate modification.

This sequence belongs to the citrate synthase family. In terms of assembly, homodimer. Methylated. Trimethylation at Lys-395 by CSKMT decreases citrate synthase activity. Post-translationally, in response to mitochondrial stress, the precursor protein is ubiquitinated by the SIFI complex in the cytoplasm before mitochondrial import, leading to its degradation. Within the SIFI complex, UBR4 initiates ubiquitin chain that are further elongated or branched by KCMF1.

The protein localises to the mitochondrion matrix. The catalysed reaction is oxaloacetate + acetyl-CoA + H2O = citrate + CoA + H(+). It functions in the pathway carbohydrate metabolism; tricarboxylic acid cycle; isocitrate from oxaloacetate: step 1/2. Functionally, key enzyme of the Krebs tricarboxylic acid cycle which catalyzes the synthesis of citrate from acetyl coenzyme A and oxaloacetate. The polypeptide is Citrate synthase, mitochondrial (CS) (Bos taurus (Bovine)).